Here is a 249-residue protein sequence, read N- to C-terminus: MSAPTGPSIDAREVARFERIAATWWDEAGPMRVLHRFNPVRLAYIRDAACRHHGRDPLGPEPLAGLTLVDIGCGGGVLSEPLARLGARVTGLDPAPTNIRVAKAHAEEAGVPVDYRPQTIESVVAAGERFDLVVAMEVVEHVADMASFVRTACAAVRPGGLFFAATINRTMRSFALAIVGAEYVLGWLPRGTHDWEKFVTPEELARAVESGGLVVADTTGVVYHPLSGRWSAARDTAVNYMITAERPAA.

The S-adenosyl-L-methionine site is built by Arg41, Gly72, Asp93, and Met136.

Belongs to the methyltransferase superfamily. UbiG/COQ3 family.

It catalyses the reaction a 3-demethylubiquinol + S-adenosyl-L-methionine = a ubiquinol + S-adenosyl-L-homocysteine + H(+). It carries out the reaction a 3-(all-trans-polyprenyl)benzene-1,2-diol + S-adenosyl-L-methionine = a 2-methoxy-6-(all-trans-polyprenyl)phenol + S-adenosyl-L-homocysteine + H(+). The protein operates within cofactor biosynthesis; ubiquinone biosynthesis. Functionally, O-methyltransferase that catalyzes the 2 O-methylation steps in the ubiquinone biosynthetic pathway. This Methylobacterium sp. (strain 4-46) protein is Ubiquinone biosynthesis O-methyltransferase.